The chain runs to 303 residues: UDP-3-O-acyl-N-acetylglucosamine deacetylase (303 aa).

Positions 78, 237, and 241 each coordinate Zn(2+). The Proton donor role is filled by histidine 264.

This sequence belongs to the LpxC family. It depends on Zn(2+) as a cofactor.

The enzyme catalyses a UDP-3-O-[(3R)-3-hydroxyacyl]-N-acetyl-alpha-D-glucosamine + H2O = a UDP-3-O-[(3R)-3-hydroxyacyl]-alpha-D-glucosamine + acetate. It participates in glycolipid biosynthesis; lipid IV(A) biosynthesis; lipid IV(A) from (3R)-3-hydroxytetradecanoyl-[acyl-carrier-protein] and UDP-N-acetyl-alpha-D-glucosamine: step 2/6. In terms of biological role, catalyzes the hydrolysis of UDP-3-O-myristoyl-N-acetylglucosamine to form UDP-3-O-myristoylglucosamine and acetate, the committed step in lipid A biosynthesis. In Xanthomonas axonopodis pv. citri (strain 306), this protein is UDP-3-O-acyl-N-acetylglucosamine deacetylase.